The sequence spans 370 residues: Homospermidine synthase 1 (370 aa).

It belongs to the deoxyhypusine synthase family. In terms of assembly, homotetramer. NAD(+) serves as cofactor. Post-translationally, the N-terminus is blocked. Expressed in roots.

It carries out the reaction putrescine + spermidine = sym-homospermidine + propane-1,3-diamine. It participates in alkaloid biosynthesis; pyrrolizidine alkaloid biosynthesis. In terms of biological role, catalyzes the transfer of an aminobutyl unit from spermidine onto putrescine. The resulting polyamine homospermidine is a precursor in the biosynthesis of pyrrolizidine alkaloids. This is Homospermidine synthase 1 (HSS1) from Senecio vernalis (Spring groundsel).